A 288-amino-acid chain; its full sequence is ATP synthase gamma chain (288 aa).

This sequence belongs to the ATPase gamma chain family. F-type ATPases have 2 components, CF(1) - the catalytic core - and CF(0) - the membrane proton channel. CF(1) has five subunits: alpha(3), beta(3), gamma(1), delta(1), epsilon(1). CF(0) has three main subunits: a, b and c.

It localises to the cell inner membrane. In terms of biological role, produces ATP from ADP in the presence of a proton gradient across the membrane. The gamma chain is believed to be important in regulating ATPase activity and the flow of protons through the CF(0) complex. This chain is ATP synthase gamma chain, found in Polaromonas naphthalenivorans (strain CJ2).